The chain runs to 205 residues: Thiamine-phosphate synthase (205 aa).

4-amino-2-methyl-5-(diphosphooxymethyl)pyrimidine is bound by residues 37–41 (QVREK) and asparagine 69. Residues aspartate 70 and aspartate 89 each coordinate Mg(2+). Residue serine 108 coordinates 4-amino-2-methyl-5-(diphosphooxymethyl)pyrimidine. 134–136 (TGS) serves as a coordination point for 2-[(2R,5Z)-2-carboxy-4-methylthiazol-5(2H)-ylidene]ethyl phosphate. Residue lysine 137 coordinates 4-amino-2-methyl-5-(diphosphooxymethyl)pyrimidine. 2-[(2R,5Z)-2-carboxy-4-methylthiazol-5(2H)-ylidene]ethyl phosphate-binding positions include glycine 165 and 185–186 (IS).

Belongs to the thiamine-phosphate synthase family. Requires Mg(2+) as cofactor.

The catalysed reaction is 2-[(2R,5Z)-2-carboxy-4-methylthiazol-5(2H)-ylidene]ethyl phosphate + 4-amino-2-methyl-5-(diphosphooxymethyl)pyrimidine + 2 H(+) = thiamine phosphate + CO2 + diphosphate. The enzyme catalyses 2-(2-carboxy-4-methylthiazol-5-yl)ethyl phosphate + 4-amino-2-methyl-5-(diphosphooxymethyl)pyrimidine + 2 H(+) = thiamine phosphate + CO2 + diphosphate. It carries out the reaction 4-methyl-5-(2-phosphooxyethyl)-thiazole + 4-amino-2-methyl-5-(diphosphooxymethyl)pyrimidine + H(+) = thiamine phosphate + diphosphate. Its pathway is cofactor biosynthesis; thiamine diphosphate biosynthesis; thiamine phosphate from 4-amino-2-methyl-5-diphosphomethylpyrimidine and 4-methyl-5-(2-phosphoethyl)-thiazole: step 1/1. Functionally, condenses 4-methyl-5-(beta-hydroxyethyl)thiazole monophosphate (THZ-P) and 2-methyl-4-amino-5-hydroxymethyl pyrimidine pyrophosphate (HMP-PP) to form thiamine monophosphate (TMP). The sequence is that of Thiamine-phosphate synthase from Clostridium botulinum (strain ATCC 19397 / Type A).